The primary structure comprises 326 residues: Putative ribose-phosphate pyrophosphokinase 2 (326 aa).

ATP is bound by residues D43–E45 and R102–Q103. H136 is a binding site for Mg(2+). Residues D225 and N229–T233 contribute to the D-ribose 5-phosphate site.

As to quaternary structure, homohexamer. The cofactor is Mg(2+).

The protein resides in the cytoplasm. It carries out the reaction D-ribose 5-phosphate + ATP = 5-phospho-alpha-D-ribose 1-diphosphate + AMP + H(+). The protein operates within metabolic intermediate biosynthesis; 5-phospho-alpha-D-ribose 1-diphosphate biosynthesis; 5-phospho-alpha-D-ribose 1-diphosphate from D-ribose 5-phosphate (route I): step 1/1. Functionally, involved in the biosynthesis of the central metabolite phospho-alpha-D-ribosyl-1-pyrophosphate (PRPP) via the transfer of pyrophosphoryl group from ATP to 1-hydroxyl of ribose-5-phosphate (Rib-5-P). This Streptococcus pyogenes serotype M6 (strain ATCC BAA-946 / MGAS10394) protein is Putative ribose-phosphate pyrophosphokinase 2.